A 383-amino-acid chain; its full sequence is MTKRRVVVGMSGGVDSSVTAWLLKEQGYDVVGLFMKNWEDDDDGEYCSTRQDWIDVVSVADLIGIDVEAVNFAAEYKDRVFAEFLREYSAGRTPNPDVLCNAEIKFKAFLDHAMSLGAQTIATGHYARVRERDGRFELLKAFDHTKDQSYFLHRLNQAQLSKTMFPLGEIPKTRVREIAAQIGLPNAKKKDSTGICFIGERPFRDFLNRYLPTKPGPMKTPDGKTVGEHIGLAFYTFGQRKGIGLGGSKDGSGEPWFVAAKDIASNTLYVVQGHDHPWLRSRELVAGNVSWVAGEPPADGARCGAKTRYRQADAPCAFGRAAQAGDERFSLVFDEPQWAVTPGQSAVLYDGDVCLGGGIIESAATGRAGTAPAGRAPALVEAR.

ATP is bound by residues 9 to 16 (GMSGGVDS) and M35. The tract at residues 95 to 97 (NPD) is interaction with target base in tRNA. C100 (nucleophile) is an active-site residue. Residues C100 and C196 are joined by a disulfide bond. An ATP-binding site is contributed by G124. The segment at 146-148 (KDQ) is interaction with tRNA. The Cysteine persulfide intermediate role is filled by C196. The segment at 308–309 (RY) is interaction with tRNA.

The protein belongs to the MnmA/TRMU family.

It localises to the cytoplasm. It carries out the reaction S-sulfanyl-L-cysteinyl-[protein] + uridine(34) in tRNA + AH2 + ATP = 2-thiouridine(34) in tRNA + L-cysteinyl-[protein] + A + AMP + diphosphate + H(+). In terms of biological role, catalyzes the 2-thiolation of uridine at the wobble position (U34) of tRNA, leading to the formation of s(2)U34. The polypeptide is tRNA-specific 2-thiouridylase MnmA (Burkholderia pseudomallei (strain 668)).